A 609-amino-acid polypeptide reads, in one-letter code: UvrABC system protein C (609 aa).

Positions 15–92 (TGSGVYQMQD…IKQFRPRYNV (78 aa)) constitute a GIY-YIG domain. The UVR domain occupies 202–237 (DQVIIKLTERMEVASENLVFEEAAHYRDQIRQLRRL).

This sequence belongs to the UvrC family. Interacts with UvrB in an incision complex.

Its subcellular location is the cytoplasm. Its function is as follows. The UvrABC repair system catalyzes the recognition and processing of DNA lesions. UvrC both incises the 5' and 3' sides of the lesion. The N-terminal half is responsible for the 3' incision and the C-terminal half is responsible for the 5' incision. In Coxiella burnetii (strain RSA 331 / Henzerling II), this protein is UvrABC system protein C.